We begin with the raw amino-acid sequence, 513 residues long: Fumarate reductase (513 aa).

41–55 (AIVIGGGLAGLSATN) contacts FAD. The residue at position 100 (serine 100) is a Phosphoserine. Catalysis depends on residues histidine 288 and arginine 311.

Belongs to the FAD-dependent oxidoreductase 2 family. FRD/SDH subfamily. The cofactor is FAD.

The protein resides in the cytoplasm. It localises to the mitochondrion. Its subcellular location is the nucleus. It carries out the reaction succinate + NAD(+) = fumarate + NADH + H(+). Irreversibly catalyzes the reduction of fumarate to succinate. The polypeptide is Fumarate reductase (osm1) (Schizosaccharomyces pombe (strain 972 / ATCC 24843) (Fission yeast)).